Reading from the N-terminus, the 103-residue chain is Histone H4, minor (103 aa).

Residues M1–K12 are compositionally biased toward gly residues. The disordered stretch occupies residues M1–G29. 4 positions are modified to N6-acetyllysine: K5, K8, K12, and K16. Positions G14 to N23 are enriched in basic residues. Residues K16 to K21 mediate DNA binding.

This sequence belongs to the histone H4 family. In terms of assembly, the nucleosome is a histone octamer containing two molecules each of H2A, H2B, H3 and H4 assembled in one H3-H4 heterotetramer and two H2A-H2B heterodimers. The octamer wraps approximately 147 bp of DNA.

The protein localises to the nucleus. It is found in the chromosome. In terms of biological role, core component of nucleosome. Nucleosomes wrap and compact DNA into chromatin, limiting DNA accessibility to the cellular machineries which require DNA as a template. Histones thereby play a central role in transcription regulation, DNA repair, DNA replication and chromosomal stability. DNA accessibility is regulated via a complex set of post-translational modifications of histones, also called histone code, and nucleosome remodeling. This Tetrahymena pyriformis protein is Histone H4, minor.